We begin with the raw amino-acid sequence, 89 residues long: Otospiralin (89 aa).

The first 21 residues, 1–21 (MQACMVPGLALCLLLGPLAGA), serve as a signal peptide directing secretion.

Belongs to the otospiralin family. As to expression, ear specific.

It is found in the secreted. In terms of biological role, may be essential for the survival of the neurosensory epithelium of the inner ear. The chain is Otospiralin (OTOS) from Homo sapiens (Human).